The following is a 739-amino-acid chain: Phosphoribosylformylglycinamidine synthase subunit PurL (739 aa).

Histidine 54 is a catalytic residue. ATP-binding residues include tyrosine 57 and lysine 96. Glutamate 98 is a binding site for Mg(2+). Residues 99 to 102 (SHNH) and arginine 121 contribute to the substrate site. The active-site Proton acceptor is the histidine 100. Position 122 (aspartate 122) interacts with Mg(2+). Residue glutamine 245 coordinates substrate. Aspartate 273 serves as a coordination point for Mg(2+). 317 to 319 (ESQ) contributes to the substrate binding site. Residues aspartate 500 and glycine 537 each coordinate ATP. Residue asparagine 538 coordinates Mg(2+). Serine 540 contributes to the substrate binding site.

This sequence belongs to the FGAMS family. Monomer. Part of the FGAM synthase complex composed of 1 PurL, 1 PurQ and 2 PurS subunits.

The protein localises to the cytoplasm. It carries out the reaction N(2)-formyl-N(1)-(5-phospho-beta-D-ribosyl)glycinamide + L-glutamine + ATP + H2O = 2-formamido-N(1)-(5-O-phospho-beta-D-ribosyl)acetamidine + L-glutamate + ADP + phosphate + H(+). The protein operates within purine metabolism; IMP biosynthesis via de novo pathway; 5-amino-1-(5-phospho-D-ribosyl)imidazole from N(2)-formyl-N(1)-(5-phospho-D-ribosyl)glycinamide: step 1/2. Its function is as follows. Part of the phosphoribosylformylglycinamidine synthase complex involved in the purines biosynthetic pathway. Catalyzes the ATP-dependent conversion of formylglycinamide ribonucleotide (FGAR) and glutamine to yield formylglycinamidine ribonucleotide (FGAM) and glutamate. The FGAM synthase complex is composed of three subunits. PurQ produces an ammonia molecule by converting glutamine to glutamate. PurL transfers the ammonia molecule to FGAR to form FGAM in an ATP-dependent manner. PurS interacts with PurQ and PurL and is thought to assist in the transfer of the ammonia molecule from PurQ to PurL. This Bacillus cereus (strain ATCC 14579 / DSM 31 / CCUG 7414 / JCM 2152 / NBRC 15305 / NCIMB 9373 / NCTC 2599 / NRRL B-3711) protein is Phosphoribosylformylglycinamidine synthase subunit PurL.